The primary structure comprises 540 residues: MNTLLEHSCDVLIIGSGAAGLSLALRLADQHQVIVLSKGPVTEGSTFYAQGGIAAVFDETDSIDSHVEDTLIAGAGICDRHAVEFVASNARSCVQWLIDQGVLFDTHIQPNGEESYHLTREGGHSHRRILHAADATGREVETTLVSKALNHPNIRVLERSNAVDLIISDKIGLPGTRRVVGAWVWNRNKEKVETCHAKAVVLATGGASKVYQYTTNPDISSGDGIAMAWRAGCRVANLEFNQFHPTALYHPQARNFLLTEALRGEGAYLKRPDGTRFMPDFDVRGELAPRDIVARAIDHEMKRLGADCMFLDISHKPADFIRQHFPMIYEKLLGLGIDLTQEPVPIVPAAHYTCGGVMVDDHGRTDVEGLYAIGEVSYTGLHGANRMASNSLLECLVYGWSAAEDITRRMPYAHDISTLPPWDESRVENPDERVIIQHNWHELRLFMWDYVGIVRTTKRLERALRRITMLQQEIDEYYAHFRVSNNLLELRNLVQVAELIVRCAMMRKESRGLHFTLDYPELLTHSGPSILSPGNHYINR.

FAD is bound by residues 16–19 (SGAA), K38, 45–52 (STFYAQGG), and D223. R290 (proton donor/acceptor) is an active-site residue. FAD contacts are provided by residues E375 and 391–392 (SL).

It belongs to the FAD-dependent oxidoreductase 2 family. NadB subfamily. It depends on FAD as a cofactor.

It is found in the cytoplasm. The enzyme catalyses L-aspartate + O2 = iminosuccinate + H2O2. It catalyses the reaction fumarate + L-aspartate = iminosuccinate + succinate. Its pathway is cofactor biosynthesis; NAD(+) biosynthesis; iminoaspartate from L-aspartate (oxidase route): step 1/1. Catalyzes the oxidation of L-aspartate to iminoaspartate, the first step in the de novo biosynthesis of NAD(+). Can use either oxygen or fumarate as electron acceptors, which allows the enzyme to be functional under aerobic and anaerobic conditions. In Escherichia coli O157:H7, this protein is L-aspartate oxidase (nadB).